A 364-amino-acid chain; its full sequence is Cobalt-precorrin-5B C(1)-methyltransferase (364 aa).

This sequence belongs to the CbiD family.

It catalyses the reaction Co-precorrin-5B + S-adenosyl-L-methionine = Co-precorrin-6A + S-adenosyl-L-homocysteine. It functions in the pathway cofactor biosynthesis; adenosylcobalamin biosynthesis; cob(II)yrinate a,c-diamide from sirohydrochlorin (anaerobic route): step 6/10. Functionally, catalyzes the methylation of C-1 in cobalt-precorrin-5B to form cobalt-precorrin-6A. In Pseudomonas putida (strain ATCC 47054 / DSM 6125 / CFBP 8728 / NCIMB 11950 / KT2440), this protein is Cobalt-precorrin-5B C(1)-methyltransferase.